Consider the following 259-residue polypeptide: Flagellar L-ring protein 1 (259 aa).

Positions 1 to 15 (MKRICLLALITTMSG) are cleaved as a signal peptide. C16 is lipidated: N-palmitoyl cysteine. A lipid anchor (S-diacylglycerol cysteine) is attached at C16. The interval 38–63 (EGDKSKDESSGIVDTLRGRNDPVAGD) is disordered.

It belongs to the FlgH family. The basal body constitutes a major portion of the flagellar organelle and consists of four rings (L,P,S, and M) mounted on a central rod.

The protein resides in the cell outer membrane. Its subcellular location is the bacterial flagellum basal body. Functionally, assembles around the rod to form the L-ring and probably protects the motor/basal body from shearing forces during rotation. The sequence is that of Flagellar L-ring protein 1 (flgH1) from Vibrio parahaemolyticus serotype O3:K6 (strain RIMD 2210633).